The chain runs to 795 residues: Arcadin-4 (795 aa).

Coiled coils occupy residues 205 to 253 (YSGL…HEQI), 323 to 412 (YDAL…YTSL), and 450 to 618 (FGGV…LKKR).

It is found in the cytoplasm. The protein resides in the cytoskeleton. Functionally, part of an actin-like archaeal cytoskeleton. The polypeptide is Arcadin-4 (Pyrobaculum calidifontis (strain DSM 21063 / JCM 11548 / VA1)).